Reading from the N-terminus, the 22-residue chain is 2.4 kDa venom peptide (22 aa).

In terms of processing, contains 2 disulfide bonds. In terms of tissue distribution, expressed by the venom gland.

The protein resides in the secreted. In terms of biological role, not lethal to mice by intraperitoneal or intracerebroventricular injections in doses up to 150 micrograms. This Heterometrus spinifer (Asia giant forest scorpion) protein is 2.4 kDa venom peptide.